The sequence spans 154 residues: Small ribosomal subunit protein uS19 (154 aa).

Belongs to the universal ribosomal protein uS19 family.

The protein is Small ribosomal subunit protein uS19 (RPS15) of Oryza sativa subsp. japonica (Rice).